The following is a 675-amino-acid chain: E3 ubiquitin-protein ligase COP1 (675 aa).

Positions 1-40 (MEEISTDPVVPAVKPDPRTSSVGEGANRHENDDGGSGGSE) are disordered. Zn(2+)-binding residues include Cys-52, Cys-55, Cys-67, His-69, Cys-72, Cys-75, Cys-86, and Cys-89. The RING-type zinc finger occupies 52 to 90 (CPICMQIIKDAFLTACGHSFCYMCIITHLRNKSDCPCCS). The CLS (cytoplasmic localization signal) stretch occupies residues 67-177 (CGHSFCYMCI…LDFLHCLRKQ (111 aa)). The SNLS (subnuclear localization signal) stretch occupies residues 120-177 (ASPLDQFREALQRGCDVSIKEVDNLLTLLAERKRKMEQEEAERNMQILLDFLHCLRKQ). The stretch at 134 to 201 (CDVSIKEVDN…IKEDINAVER (68 aa)) forms a coiled coil. Positions 261 to 290 (EGKAQGSSHGLPKKDALSGSDSQSLNQSTV) are disordered. The segment covering 279-290 (GSDSQSLNQSTV) has biased composition (polar residues). The Bipartite nuclear localization signal signature appears at 294–317 (RKKRIHAQFNDLQECYLQKRRQLA). 7 WD repeats span residues 369 to 408 (HSANIVSSIEFDRDDELFATAGVSRCIKVFDFSSVVNEPA), 418 to 458 (STRS…SLME), 461 to 501 (EHEK…SVIN), 503 to 543 (DMKA…QPLH), 547 to 585 (GHKKAVSYVKFLSNNELASASTDSTLRLWDVKDNLPVRT), 588 to 627 (GHTNEKNFVGLTVNSEYLACGSETNEVYVYHKEITRPVTS), and 642 to 675 (AGSYFISAVCWKSDSPTMLTANSQGTIKVLVLAA). The segment at 593 to 595 (KNF) is binding of human TRIB1 COP1-binding-motif.

In terms of assembly, homodimer. Interacts with HY5, HYH, BBX24/STO, BBX25/STH, CIP8, COP10, SPA1, SPA2, SPA3, SPA4 and UVR8 and phosphorylated PHYA. Light induces dissociation of the SPA1/COP1 complex. Interacts with HRT/RPP8 and triggers it to the 26s proteasome. Binds to CRY2; this competitive interaction prevents triggering to proteasome of other binding proteins. Binds to SHW1 in the nucleus. Bonds to CIP7. Interacts with CSU2. Binds to CIP1. Interacts directly with DHU1. Associates to UNE10/PIF8. Binds directly to PCH1 and PCHL. In terms of processing, autoubiquitinated.

Its subcellular location is the nucleus. The protein resides in the cytoplasm. The enzyme catalyses S-ubiquitinyl-[E2 ubiquitin-conjugating enzyme]-L-cysteine + [acceptor protein]-L-lysine = [E2 ubiquitin-conjugating enzyme]-L-cysteine + N(6)-ubiquitinyl-[acceptor protein]-L-lysine.. The protein operates within protein modification; protein ubiquitination. E3 ubiquitin-protein ligase that acts as a repressor of photomorphogenesis and as an activator of etiolation in darkness. E3 ubiquitin ligases accept ubiquitin from an E2 ubiquitin-conjugating enzyme in the form of a thioester and then directly transfers the ubiquitin to targeted substrates. Represses photomorphogenesis in darkness by mediating ubiquitination and subsequent proteasomal degradation of light-induced transcription factors such as HY5, HYH and LAF1. Down-regulates MYB21, probably via ubiquitination process. Light stimuli abrogate the repression of photomorphogenesis, possibly due to its localization to the cytoplasm. Could play a role in switching between skotomorphogenetic and photomorphogenetic pathways. Mediates the ubiquitination-dependent degradation of HY5 in the darkness during seedling development (e.g. hypocotyl growth). Represses CIP7 in darkness. Triggers ubiquitination and subsequent protein degradation of UNE10/PIF8, PCH1 and PCHL in the dark. In Arabidopsis thaliana (Mouse-ear cress), this protein is E3 ubiquitin-protein ligase COP1.